The sequence spans 797 residues: MKLKQIASALMMLGISPLALADFTIQDIRVEGLQRTEPSTVFNYLPVKVGDTYNDTHGSAIIKSLYATGFFDDVRVETADGQLLLTVIERPTIGSLNITGAKMLQNDAIKKNLESFGLAQSQYFNQATLNQAVAGLKEEYLGRGKLNIQITPKVTKLARNRVDIDITIDEGKSAKITDIEFEGNQVYSDRKLMRQMSLTEGGIWTWLTRSNQFNEQKFAQDMEKVTDFYQNNGYFDFRILDTDIQTNEDKTKQTIKITVHEGGRFRWGKVSIEGDTNEVPKAELEKLLTMKPGKWYERQQMTAVLGEIQNRMGSAGYAYSEISVQPLPNAETKTVDFVLHIEPGRKIYVNEIHITGNNKTRDEVVRRELRQMESAPYDTSKLQRSKERVELLGYFDNVQFDAVPLAGTPDKVDLNMSLTERSTGSLDLSAGWVQDTGLVMSAGVSQDNLFGTGKSAALRASRSKTTLNGSLSFTDPYFTADGVSLGYDVYGKAFDPRKASTSIKQYKTTTAGAGIRMSVPVTEYDRVNFGLVAEHLTVNTYNKAPKHYADFIKKYGKTDGTDGSFKGWLYKGTVGWGRNKTDSALWPTRGYLTGVNAEIALPGSKLQYYSATHNQTWFFPLSKTFTLMLGGEVGIAGGYGRTKEIPFFENFYGGGLGSVRGYESGTLGPKVYDEYGEKISYGGNKKANVSAELLFPMPGAKDARTVRLSLFADAGSVWDGKTYDDNSSSATGGRVQNIYGAGNTHKSTFTNELRYSAGGAVTWLSPLGPMKFSYAYPLKKKPEDEIQRFQFQLGTTF.

The N-terminal stretch at 1 to 21 (MKLKQIASALMMLGISPLALA) is a signal peptide. POTRA domains lie at 23–90 (FTIQ…VIER), 91–171 (PTIG…IDEG), 174–262 (AKIT…VHEG), 265–344 (FRWG…IEPG), and 347–421 (IYVN…LTER).

The protein belongs to the BamA family. In terms of assembly, part of the Bam complex.

It is found in the cell outer membrane. Functionally, part of the outer membrane protein assembly complex, which is involved in assembly and insertion of beta-barrel proteins into the outer membrane. This Neisseria meningitidis serogroup B (strain ATCC BAA-335 / MC58) protein is Outer membrane protein assembly factor BamA.